The following is a 491-amino-acid chain: Ketol-acid reductoisomerase (NADP(+)) (491 aa).

Residues A15–S208 enclose the KARI N-terminal Rossmann domain. Residues C45–Q48, R68, R76, S78, and D108–Q110 each bind NADP(+). Residue H132 is part of the active site. NADP(+) is bound at residue G158. 2 consecutive KARI C-terminal knotted domains span residues S209–Q344 and F345–M484. Residues D217, E221, E389, and E393 each coordinate Mg(2+). Residue S414 coordinates substrate.

This sequence belongs to the ketol-acid reductoisomerase family. The cofactor is Mg(2+).

It carries out the reaction (2R)-2,3-dihydroxy-3-methylbutanoate + NADP(+) = (2S)-2-acetolactate + NADPH + H(+). The enzyme catalyses (2R,3R)-2,3-dihydroxy-3-methylpentanoate + NADP(+) = (S)-2-ethyl-2-hydroxy-3-oxobutanoate + NADPH + H(+). It functions in the pathway amino-acid biosynthesis; L-isoleucine biosynthesis; L-isoleucine from 2-oxobutanoate: step 2/4. Its pathway is amino-acid biosynthesis; L-valine biosynthesis; L-valine from pyruvate: step 2/4. In terms of biological role, involved in the biosynthesis of branched-chain amino acids (BCAA). Catalyzes an alkyl-migration followed by a ketol-acid reduction of (S)-2-acetolactate (S2AL) to yield (R)-2,3-dihydroxy-isovalerate. In the isomerase reaction, S2AL is rearranged via a Mg-dependent methyl migration to produce 3-hydroxy-3-methyl-2-ketobutyrate (HMKB). In the reductase reaction, this 2-ketoacid undergoes a metal-dependent reduction by NADPH to yield (R)-2,3-dihydroxy-isovalerate. The protein is Ketol-acid reductoisomerase (NADP(+)) of Salmonella agona (strain SL483).